Consider the following 270-residue polypeptide: Putative pyruvate, phosphate dikinase regulatory protein (270 aa).

149–156 contacts ADP; the sequence is GVSRTSKT.

This sequence belongs to the pyruvate, phosphate/water dikinase regulatory protein family. PDRP subfamily.

The enzyme catalyses N(tele)-phospho-L-histidyl/L-threonyl-[pyruvate, phosphate dikinase] + ADP = N(tele)-phospho-L-histidyl/O-phospho-L-threonyl-[pyruvate, phosphate dikinase] + AMP + H(+). The catalysed reaction is N(tele)-phospho-L-histidyl/O-phospho-L-threonyl-[pyruvate, phosphate dikinase] + phosphate + H(+) = N(tele)-phospho-L-histidyl/L-threonyl-[pyruvate, phosphate dikinase] + diphosphate. Functionally, bifunctional serine/threonine kinase and phosphorylase involved in the regulation of the pyruvate, phosphate dikinase (PPDK) by catalyzing its phosphorylation/dephosphorylation. This is Putative pyruvate, phosphate dikinase regulatory protein from Thermoanaerobacter pseudethanolicus (strain ATCC 33223 / 39E) (Clostridium thermohydrosulfuricum).